The sequence spans 737 residues: O-GlcNAcase BT_4395 (737 aa).

An N-terminal signal peptide occupies residues 1–21; that stretch reads MKNNKIYLLGACLLCAVTTFA. Positions 148–433 are catalytic domain; it reads VRYRGVVEGF…WKDAIRTILP (286 aa). The GH84 domain occupies 149 to 416; the sequence is RYRGVVEGFY…SVASYAWNPA (268 aa). Residues Gly156, Lys187, and Asp263 each coordinate a protein. Asp264 (proton donor) is an active-site residue. A protein contacts are provided by residues Tyr303, 358 to 360, Asp365, and Asn393; that span reads WWN.

It belongs to the glycosyl hydrolase 84 family. Homodimer.

It catalyses the reaction 3-O-(N-acetyl-beta-D-glucosaminyl)-L-seryl-[protein] + H2O = N-acetyl-D-glucosamine + L-seryl-[protein]. The catalysed reaction is 3-O-(N-acetyl-beta-D-glucosaminyl)-L-threonyl-[protein] + H2O = L-threonyl-[protein] + N-acetyl-D-glucosamine. Its activity is regulated as follows. Inhibited by 1,2-dideoxy-2'-methyl-alpha-D-glucopyranoso-[2,1-d]-delta 2'-thiazoline (NAG-thiazoline) and O-(2-acetamido-2-deoxy-D-glucopyranosylidene)amino-N-phenyl-carbamate (PUGNAc). Not inhibited by Streptozotocin. In terms of biological role, can hydrolyze the glycosidic link of O-GlcNAcylated proteins. Can use p-nitrophenyl-beta-GlcNAc and 4-methylumbelliferone-GlcNAc as substrates (in vitro). The chain is O-GlcNAcase BT_4395 from Bacteroides thetaiotaomicron (strain ATCC 29148 / DSM 2079 / JCM 5827 / CCUG 10774 / NCTC 10582 / VPI-5482 / E50).